A 337-amino-acid chain; its full sequence is Diacylglycerol acyltransferase/mycolyltransferase Ag85A (337 aa).

Residues 1–42 form the signal peptide; the sequence is MKLVDRFRGAATGTSRRLMVGAVGAALLSGLVGFVGGSATAS. 85–86 serves as a coordination point for substrate; the sequence is MR. Residues 101-111 form a fibronectin-binding region; the sequence is FEWYYQSGISV. Cysteines 130 and 135 form a disulfide. Substrate contacts are provided by Ser169 and Asp197. The Nucleophile role is filled by Ser169. Glu273 is an active-site residue. Substrate is bound by residues 275–278, Lys282, and 305–307; these read FVRT and HSW. The active site involves His305.

Belongs to the mycobacterial A85 antigen family. As to quaternary structure, homodimer.

The protein localises to the secreted. The protein resides in the cell wall. It localises to the cytoplasm. The catalysed reaction is an acyl-CoA + a 1,2-diacyl-sn-glycerol = a triacyl-sn-glycerol + CoA. The enzyme catalyses 2 alpha,alpha'-trehalose 6-mycolate = alpha,alpha'-trehalose 6,6'-bismycolate + alpha,alpha-trehalose. The antigen 85 proteins (FbpA, FbpB, FbpC) are responsible for the high affinity of mycobacteria for fibronectin, a large adhesive glycoprotein, which facilitates the attachment of M.tuberculosis to murine alveolar macrophages (AMs). They also help to maintain the integrity of the cell wall by catalyzing the transfer of mycolic acids to cell wall arabinogalactan, and through the synthesis of alpha,alpha-trehalose dimycolate (TDM, cord factor). They catalyze the transfer of a mycoloyl residue from one molecule of alpha,alpha-trehalose monomycolate (TMM) to another TMM, leading to the formation of TDM. FbpA mediates triacylglycerol (TAG) formation with long-chain acyl-CoA as the acyl donor and 1,2-dipalmitoyl-sn-glycerol (1,2-dipalmitin) as the acyl acceptor. It has a preference for C26:0-CoA over C18:1-CoA. This chain is Diacylglycerol acyltransferase/mycolyltransferase Ag85A (fbpA), found in Mycobacterium ulcerans.